Here is a 171-residue protein sequence, read N- to C-terminus: Adenine phosphoribosyltransferase (171 aa).

Belongs to the purine/pyrimidine phosphoribosyltransferase family. As to quaternary structure, homodimer.

Its subcellular location is the cytoplasm. It catalyses the reaction AMP + diphosphate = 5-phospho-alpha-D-ribose 1-diphosphate + adenine. It participates in purine metabolism; AMP biosynthesis via salvage pathway; AMP from adenine: step 1/1. Catalyzes a salvage reaction resulting in the formation of AMP, that is energically less costly than de novo synthesis. In Mycoplasma mobile (strain ATCC 43663 / 163K / NCTC 11711) (Mesomycoplasma mobile), this protein is Adenine phosphoribosyltransferase.